A 260-amino-acid polypeptide reads, in one-letter code: Triosephosphate isomerase (260 aa).

A substrate-binding site is contributed by 11–13; that stretch reads NWK. The Electrophile role is filled by His103. Glu175 functions as the Proton acceptor in the catalytic mechanism. Substrate is bound by residues Gly181, Ser220, and 241–242; that span reads GG.

Belongs to the triosephosphate isomerase family. Homodimer.

It is found in the cytoplasm. The enzyme catalyses D-glyceraldehyde 3-phosphate = dihydroxyacetone phosphate. Its pathway is carbohydrate biosynthesis; gluconeogenesis. The protein operates within carbohydrate degradation; glycolysis; D-glyceraldehyde 3-phosphate from glycerone phosphate: step 1/1. Its function is as follows. Involved in the gluconeogenesis. Catalyzes stereospecifically the conversion of dihydroxyacetone phosphate (DHAP) to D-glyceraldehyde-3-phosphate (G3P). The chain is Triosephosphate isomerase from Shewanella sediminis (strain HAW-EB3).